A 2371-amino-acid polypeptide reads, in one-letter code: Highly reducing polyketide synthase ntnH (2371 aa).

One can recognise a Ketosynthase family 3 (KS3) domain in the interval 10–429 (PSPIAIVGIG…GANAHVILEG (420 aa)). Active-site for beta-ketoacyl synthase activity residues include C180, H316, and H352. Residues 528 to 796 (FIFTGQGAQW…NSCLSRGADA (269 aa)) form a malonyl-CoA:ACP transacylase (MAT) domain region. The N-terminal hotdog fold stretch occupies residues 858–986 (HELLGARVIG…GKVHPGNAST (129 aa)). The segment at 858–1142 (HELLGARVIG…GIRFRILENN (285 aa)) is dehydratase (DH) domain. The PKS/mFAS DH domain occupies 858–1145 (HELLGARVIG…FRILENNRSK (288 aa)). The active-site Proton acceptor; for dehydratase activity is H890. Positions 1001–1145 (VRGVISAKWY…FRILENNRSK (145 aa)) are C-terminal hotdog fold. D1059 (proton donor; for dehydratase activity) is an active-site residue. The tract at residues 1309-1456 (FFQLLGHNKK…FENVTAIMDQ (148 aa)) is methyltransferase (CMet) domain. Residues 1669 to 1968 (GLLSSLQWQG…GHRPIGAICI (300 aa)) are enoyl reductase (ER) (ER) domain. Positions 1993 to 2167 (SYVLIGGLGG…ASVIDLGVME (175 aa)) are ketoreductase (KR) domain. The Carrier domain maps to 2280–2362 (EDETAVAEFL…DLGKLARSRI (83 aa)). At S2322 the chain carries O-(pantetheine 4'-phosphoryl)serine.

It functions in the pathway secondary metabolite biosynthesis; terpenoid biosynthesis. Functionally, highly reducing polyketide synthase; part of the gene cluster that mediates the biosynthesis of the meroterpenoids nectripenoids A and B, as well as cochliquninone D and isocochliquninone E. The pathway probably begins with the HR-PKS ntnH that catalyzes two chain-extension steps to form a reduced triketide, which then primes the SAT domain in the NR-PKS ntnG to initiate three more cycles of extension to give a linear hexaketide corresponding to the polyketide part of nectripenoids. The FAD-dependent monooxygenase ntnJ then performs an oxidative decarboxylation at C11 of the ntnH/ntnG product, via an electrophilic aromatic hydroxylation with concomitant ipso-decarboxylation. The membrane-bound polyprenyl transferase ntnF then introduces a farnesyl group before the FAD-dependent monooxygenase ntnK functions as the first epoxidase on terminal C12'-C13' olefin, followed by a second epoxidation on C7'-C8' catalyzed by ntnA. The terpene cyclase/mutase ntnI then initiates the sequential tricyclic ring formation through protonation of the terminal epoxide and catalyzes the regioselective and stereoselective 6/6/6-tricyclic ring formation. The cytochrome P450 monooxygenase ntnM may then hydroxylate C1'. The sequence is that of Highly reducing polyketide synthase ntnH from Nectria sp.